The following is a 107-amino-acid chain: MIKQITERFTPRQYLAEFLLGLTALFGLYLIVAWSSYTPLDNSWATVSAYGNTINKVGSFGAWIIDLFFVFLGYVAHIIPFTAFLVPIYLLKTKAVKQLSCTRIILR.

2 helical membrane-spanning segments follow: residues 14–34 (YLAEFLLGLTALFGLYLIVAW) and 68–88 (FFVFLGYVAHIIPFTAFLVPI).

The protein resides in the cell membrane. This is an uncharacterized protein from Haemophilus influenzae (strain ATCC 51907 / DSM 11121 / KW20 / Rd).